The primary structure comprises 1253 residues: Structural polyprotein (1253 aa).

The segment at 37 to 71 is host transcription inhibition; that stretch reads FQAQQMQQLISAVNALTMRQNAIAPARPPKPKKKK. The tract at residues 58–109 is disordered; sequence AIAPARPPKPKKKKTTKPKPKTQPKKINGKTQQQKKKDKQADKKKKKPGKRE. The Nuclear localization signal signature appears at 64–105; it reads PPKPKKKKTTKPKPKTQPKKINGKTQQQKKKDKQADKKKKKP. Over residues 65–107 the composition is skewed to basic residues; that stretch reads PKPKKKKTTKPKPKTQPKKINGKTQQQKKKDKQADKKKKKPGK. Positions 87-120 are binding to the viral RNA; sequence KTQQQKKKDKQADKKKKKPGKRERMCMKIENDCI. Residues 105 to 119 are ribosome-binding; sequence PGKRERMCMKIENDC. C119 and C134 are joined by a disulfide. The Peptidase S3 domain occupies 119–267; the sequence is CIFEVKHEGK…RVTPEGSEEW (149 aa). H145 serves as the catalytic Charge relay system. The Nuclear export signal motif lies at 150–160; it reads IDNADLAKLAF. Residues 161-166 are interaction with spike glycoprotein E2; the sequence is KKSSKY. The active-site Charge relay system is the D167. The segment at 189 to 199 is dimerization of the capsid protein; sequence PEGHYNWHHGA. S219 (charge relay system) is an active-site residue. Positions 225–229 are dimerization of the capsid protein; the sequence is DNKGR. Over 268-701 the chain is Extracellular; that stretch reads SAPLITAMCV…YGLYPAATVS (434 aa). Cystine bridges form between C276-C285, C290-C294, and C293-C325. N280 carries N-linked (GlcNAc...) asparagine; by host glycosylation. Residue N327 is glycosylated (N-linked (GlcNAc...) asparagine; by host). Cystine bridges form between C352-C458, C355-C361, C424-C438, C486-C598, C534-C558, and C536-C553. N-linked (GlcNAc...) asparagine; by host glycosylation is present at N533. N595 carries N-linked (GlcNAc...) asparagine; by host glycosylation. Residues 702 to 722 form a helical membrane-spanning segment; that stretch reads AVVGMSLLALISIFASCYMLV. The S-stearoyl cysteine; by host moiety is linked to residue C718. The interval 723-727 is interaction with the capsid protein; the sequence is AARSK. Topologically, residues 723–755 are cytoplasmic; the sequence is AARSKCLTPYALTPGAAVPWTLGILCCAPRAHA. C728 carries S-stearoyl cysteine; by host lipidation. Residues 728-748 are transient transmembrane before p62-6K protein processing; sequence CLTPYALTPGAAVPWTLGILC. C728 and C749 are joined by a disulfide. Residues C748 and C749 are each lipidated (S-palmitoyl cysteine; by host). Over 756–770 the chain is Extracellular; the sequence is ASVAETMAYLWDQNQ. A helical membrane pass occupies residues 771–791; it reads ALFWLEFAAPVACILIITYCL. Residue R792 is a topological domain, cytoplasmic. A helical transmembrane segment spans residues 793–813; it reads NVLCCCKSLSFLVLLSLGATA. At 814–1230 the chain is on the extracellular side; that stretch reads RAYEHSTVMP…ALSWVQKISG (417 aa). 4 cysteine pairs are disulfide-bonded: C864–C929, C877–C909, C878–C911, and C883–C893. The interval 899 to 916 is E1 fusion peptide loop; sequence VYPFMWGGAYCFCDSENT. N-linked (GlcNAc...) asparagine; by host glycosylation is found at N956 and N1085. 4 cysteine pairs are disulfide-bonded: C1074/C1086, C1116/C1191, C1121/C1195, and C1143/C1185. An E1-DIII; interaction with host receptor VLDLR region spans residues 1112-1192; sequence IDLTCTVATC…SLCSARATCS (81 aa). The helical transmembrane segment at 1231–1251 threads the bilayer; the sequence is GLGAFAIGAILVLVVVTCIGL. The S-stearoyl cysteine; by host moiety is linked to residue C1248. The Cytoplasmic segment spans residues 1252–1253; sequence RR.

Homodimer. Homomultimer. Interacts with host karyopherin KPNA4; this interaction allows the nuclear import of the viral capsid protein. Interacts with spike glycoprotein E2. Interacts with host IRAK1; the interaction leads to inhibition of IRAK1-dependent signaling. As to quaternary structure, the precursor of protein E3/E2 and E1 form a heterodimer shortly after synthesis. In terms of assembly, the precursor of protein E3/E2 and E1 form a heterodimer shortly after synthesis. Processing of the precursor of protein E3/E2 into E2 and E3 results in a heterodimer of the spike glycoproteins E2 and E1. Spike at virion surface are constituted of a trimer of E2-E1 heterodimers. E2-E1 heterodimers interact with host VLDLR or LRP8/APOER2 to mediate viral entry. After target cell attachment and endocytosis, E1 change conformation to form homotrimers. Interacts with 6K protein. Interacts (via E1-DIII) with host VLDLR (via class A repeats); this interaction mediates viral entry into host cell. Interacts with spike glycoprotein E1. Processing of the precursor of protein E3/E2 into E2 and E3 results in a heterodimer of the spike glycoproteins E2 and E1. Spike at virion surface are constituted of a trimer of E2-E1 heterodimers. E2-E1 heterodimers interact with host VLDLR or LRP8/APOER2 to mediate viral entry. Interacts with 6K protein. As to quaternary structure, oligomer. Interacts with spike glycoprotein E1. Interacts with spike glycoprotein E2. Post-translationally, specific enzymatic cleavages in vivo yield mature proteins. Capsid protein is auto-cleaved during polyprotein translation, unmasking a signal peptide at the N-terminus of the precursor of E3/E2. The remaining polyprotein is then targeted to the host endoplasmic reticulum, where host signal peptidase cleaves it into pE2, 6K and E1 proteins. pE2 is further processed to mature E3 and E2 by host furin in trans-Golgi vesicle. Protein processing process takes about 30 minutes at physiologic temperatures. The folding of the p62/6K/E1 precursor requires the formation of intrachain disulfide bonds and has been shown to involve a transient covalent interaction between the nascent and newly synthesized heterodimer and the host-cell chaperones, P4HB/PDI and PDIA3/ERp57. The folding pathway also includes non covalent interaction with human CANX/calnexin and CALR/calreticulin. Palmitoylated via thioester bonds. These palmitoylations may induce disruption of the C-terminus transmembrane. This would result in the reorientation of E2 C-terminus from lumenal to cytoplasmic side. In terms of processing, envelope E1, E2 and E3 proteins are N-glycosylated. Post-translationally, stearoylated. Palmitoylated via thioester bonds with about four covalently bound fatty acids per molecule.

The protein localises to the virion. Its subcellular location is the host cytoplasm. It is found in the host cell membrane. It localises to the host nucleus. The protein resides in the virion membrane. The protein localises to the host Golgi apparatus. Its subcellular location is the host trans-Golgi network. It is found in the host endoplasmic reticulum. It catalyses the reaction Autocatalytic release of the core protein from the N-terminus of the togavirus structural polyprotein by hydrolysis of a -Trp-|-Ser- bond.. Forms an icosahedral capsid with a T=4 symmetry composed of 240 copies of the capsid protein surrounded by a lipid membrane through which penetrate 80 spikes composed of trimers of E1-E2 heterodimers. The capsid protein binds to the viral RNA genome at a site adjacent to a ribosome binding site for viral genome translation following genome release. Possesses a protease activity that results in its autocatalytic cleavage from the nascent structural protein. Following its self-cleavage, the capsid protein transiently associates with ribosomes, and within several minutes the protein binds to viral RNA and rapidly assembles into icosahedric core particles. The resulting nucleocapsid eventually associates with the cytoplasmic domain of the spike glycoprotein E2 at the cell membrane, leading to budding and formation of mature virions. In case of infection, new virions attach to target cells and after clathrin-mediated endocytosis their membrane fuses with the host endosomal membrane. This leads to the release of the nucleocapsid into the cytoplasm, followed by an uncoating event necessary for the genomic RNA to become accessible. The uncoating might be triggered by the interaction of capsid proteins with ribosomes. Binding of ribosomes would release the genomic RNA since the same region is genomic RNA-binding and ribosome-binding. Specifically inhibits interleukin-1 receptor-associated kinase 1/IRAK1-dependent signaling during viral entry, representing a means by which the alphaviruses may evade innate immune detection and activation prior to viral gene expression. Its function is as follows. Provides the signal sequence for the translocation of the precursor of protein E3/E2 to the host endoplasmic reticulum. Furin-cleaved E3 remains associated with spike glycoprotein E1 and mediates pH protection of the latter during the transport via the secretory pathway. After virion release from the host cell, the assembly protein E3 is gradually released in the extracellular space. Functionally, plays a role in viral attachment to target host cell, by binding to the cell receptors VLDLR or LRP8/APOER2. The host LDLR can act as a cell receptor for viral entry. Synthesized as a p62 precursor which is processed by furin at the cell membrane just before virion budding, giving rise to E2-E1 heterodimer. The p62-E1 heterodimer is stable, whereas E2-E1 is unstable and dissociate at low pH. p62 is processed at the last step, presumably to avoid E1 fusion activation before its final export to cell surface. E2 C-terminus contains a transitory transmembrane that would be disrupted by palmitoylation, resulting in reorientation of the C-terminal tail from lumenal to cytoplasmic side. This step is critical since E2 C-terminus is involved in budding by interacting with capsid proteins. This release of E2 C-terminus in cytoplasm occurs lately in protein export, and precludes premature assembly of particles at the endoplasmic reticulum membrane. In terms of biological role, acts as a viroporin that participates in virus glycoprotein processing and transport to the plasma membrane, cell permeabilization and budding of viral particles. Disrupts the calcium homeostasis of the cell, probably at the endoplasmic reticulum level. This leads to cytoplasmic calcium elevation. Because of its lipophilic properties, the 6K protein is postulated to influence the selection of lipids that interact with the transmembrane domains of the glycoproteins, which, in turn, affects the deformability of the bilayer required for the extreme curvature that occurs as budding proceeds. Present in low amount in virions, about 3% compared to viral glycoproteins. Class II viral fusion protein. Fusion activity is inactive as long as E1 is bound to E2 in mature virion. After virus attachment to target cell via host VLDLR or LRP8/APOER2 and endocytosis, acidification of the endosome induces dissociation of E1/E2 heterodimer and concomitant trimerization of the E1 subunits. This E1 trimer is fusion active, and promotes release of viral nucleocapsid in cytoplasm after endosome and viral membrane fusion. Efficient fusion requires the presence of cholesterol and sphingolipid in the target membrane. Fusion is optimal at levels of about 1 molecule of cholesterol per 2 molecules of phospholipids, and is specific for sterols containing a 3-beta-hydroxyl group. The protein is Structural polyprotein of Aedes (Middle-African hedgehog).